Reading from the N-terminus, the 125-residue chain is Splicing factor 3B subunit 6 (125 aa).

The segment at Glu16–Lys29 is interaction with pre-mRNA branch site. Residues Arg19–Ala94 enclose the RRM domain. Residue Lys29 is modified to N6-acetyllysine; alternate. Lys29 participates in a covalent cross-link: Glycyl lysine isopeptide (Lys-Gly) (interchain with G-Cter in SUMO2); alternate. An N6-acetyllysine modification is found at Lys41.

Component of the 17S U2 SnRNP complex, a ribonucleoprotein complex that contains small nuclear RNA (snRNA) U2 and a number of specific proteins. Part of the SF3B subcomplex of the 17S U2 SnRNP complex. SF3B associates with the splicing subcomplex SF3A and a 12S RNA unit to form the U2 small nuclear ribonucleoproteins complex (U2 snRNP). Within the SF3B complex interacts directly with SF3B1. Component of the minor spliceosome, which splices U12-type introns.

The protein localises to the nucleus. Component of the 17S U2 SnRNP complex of the spliceosome, a large ribonucleoprotein complex that removes introns from transcribed pre-mRNAs. The 17S U2 SnRNP complex (1) directly participates in early spliceosome assembly and (2) mediates recognition of the intron branch site during pre-mRNA splicing by promoting the selection of the pre-mRNA branch-site adenosine, the nucleophile for the first step of splicing. Within the 17S U2 SnRNP complex, SF3B6 is part of the SF3B subcomplex, which is required for 'A' complex assembly formed by the stable binding of U2 snRNP to the branchpoint sequence in pre-mRNA. Sequence independent binding of SF3A and SF3B subcomplexes upstream of the branch site is essential, it may anchor U2 snRNP to the pre-mRNA. Within the 17S U2 SnRNP complex, SF3B6 directly contacts the pre-mRNA branch site adenosine for the first catalytic step of splicing. SF3B6 stabilizes the intron branch site-U2 snRNA duplex, thereby promoting-binding of introns with poor sequence complementarity. Also acts as a component of the minor spliceosome, which is involved in the splicing of U12-type introns in pre-mRNAs. This Mus musculus (Mouse) protein is Splicing factor 3B subunit 6 (Sf3b6).